Here is a 218-residue protein sequence, read N- to C-terminus: Nonsense-mediated decay protein 4 (218 aa).

It is found in the cytoplasm. In terms of biological role, involved in nonsense-mediated decay of mRNAs containing premature stop codons. The chain is Nonsense-mediated decay protein 4 (NMD4) from Saccharomyces cerevisiae (strain ATCC 204508 / S288c) (Baker's yeast).